Consider the following 788-residue polypeptide: Glucan 1,3-beta-glucosidase (788 aa).

Positions 1-42 (MRFSSLLACLGAVGIQAAAIPFQRRVDNTTDSGSLDAAQAAA) are cleaved as a signal peptide. N-linked (GlcNAc...) asparagine glycans are attached at residues Asn-28, Asn-233, Asn-381, and Asn-773.

The protein belongs to the glycosyl hydrolase 55 family.

The catalysed reaction is Successive hydrolysis of beta-D-glucose units from the non-reducing ends of (1-&gt;3)-beta-D-glucans, releasing alpha-glucose.. The sequence is that of Glucan 1,3-beta-glucosidase (EXG1) from Cochliobolus carbonum (Maize leaf spot fungus).